Reading from the N-terminus, the 259-residue chain is Factor V activator (259 aa).

The first 18 residues, 1-18, serve as a signal peptide directing secretion; that stretch reads MVLIRVLANLLVLQLSYA. Residues 19–24 constitute a propeptide that is removed on maturation; it reads QKSSEL. Positions 25 to 251 constitute a Peptidase S1 domain; that stretch reads VVGGDECDIN…YTDWIQSIIA (227 aa). Intrachain disulfides connect C31–C165, C52–C68, C100–C258, C144–C212, C176–C191, and C202–C227. Catalysis depends on charge relay system residues H67 and D112. S206 functions as the Charge relay system in the catalytic mechanism. The N-linked (GlcNAc...) asparagine glycan is linked to N253.

This sequence belongs to the peptidase S1 family. Snake venom subfamily. In terms of assembly, monomer. N-glycosylated. Contains 4.4% of hexoses, 4.4% of hexosamines and 3.1% of sialic acids. As to expression, expressed by the venom gland.

It is found in the secreted. The catalysed reaction is Fully activates human clotting factor V by a single cleavage at the 1545-Trp-Tyr-Leu-Arg-|-Ser-Asn-Asn-Gly-1552 bond. Cattle, but not rabbit, factor V is cleaved, and no other proteins of the clotting system are attacked. Esterase activity is observed on Bz-Arg-OEt and Tos-Arg-OMe, and amidase activity on Phe-pipecolyl-Arg-NHPhNO2.. Its activity is regulated as follows. Inhibited by D-Phe-Pro-Arg-chloromethyl ketone (FPRCK) (98%), PMSF (93%), benzamidine (67%), and diisopropylfluorophosphate (DFP). Is not inhibited by BPTI, antithrombin and EDTA. In terms of biological role, venom serine protease that converts factor V (F5) to the active form Va in the presence of calcium ions and phospholipids. It cleaves the Arg(1545)-Ser(1546) linkage in the human factor V molecule. Has hydrolytic activities against BAEE (1.2 U/mg), TAME, and Pro-Phe-Arg-MCA (4.9 U/mg). Shows coagulant activity. The protein is Factor V activator of Macrovipera lebetinus (Levantine viper).